A 70-amino-acid polypeptide reads, in one-letter code: Small ribosomal subunit protein bS21 (70 aa).

This sequence belongs to the bacterial ribosomal protein bS21 family.

The protein is Small ribosomal subunit protein bS21 of Helicobacter hepaticus (strain ATCC 51449 / 3B1).